A 169-amino-acid chain; its full sequence is UPF0303 protein BruAb1_1406 (169 aa).

This sequence belongs to the UPF0303 family.

In Brucella abortus biovar 1 (strain 9-941), this protein is UPF0303 protein BruAb1_1406.